Here is a 151-residue protein sequence, read N- to C-terminus: Ribosome maturation factor RimP (151 aa).

Belongs to the RimP family.

It is found in the cytoplasm. Required for maturation of 30S ribosomal subunits. This Shewanella amazonensis (strain ATCC BAA-1098 / SB2B) protein is Ribosome maturation factor RimP.